Reading from the N-terminus, the 205-residue chain is Peroxynitrite isomerase (205 aa).

A disordered region spans residues M1–Q23. Positions G52–G58 match the GXWXGXG motif. Positions 63, 168, and 195 each coordinate heme b.

It belongs to the nitrobindin family. In terms of assembly, homodimer. The cofactor is heme b.

The enzyme catalyses peroxynitrite = nitrate. It functions in the pathway nitrogen metabolism. Its function is as follows. Heme-binding protein able to scavenge peroxynitrite and to protect free L-tyrosine against peroxynitrite-mediated nitration, by acting as a peroxynitrite isomerase that converts peroxynitrite to nitrate. Therefore, this protein likely plays a role in peroxynitrite sensing and in the detoxification of reactive nitrogen and oxygen species (RNS and ROS, respectively). Is able to bind nitric oxide (NO) in vitro, but may act as a sensor of peroxynitrite levels in vivo. The polypeptide is Peroxynitrite isomerase (Mycobacteroides abscessus (strain ATCC 19977 / DSM 44196 / CCUG 20993 / CIP 104536 / JCM 13569 / NCTC 13031 / TMC 1543 / L948) (Mycobacterium abscessus)).